The primary structure comprises 384 residues: S-adenosylmethionine synthase (384 aa).

Residue His16 coordinates ATP. Asp18 is a binding site for Mg(2+). K(+) is bound at residue Glu44. L-methionine contacts are provided by Glu57 and Gln100. Positions 100–110 (QSADIAMGVDE) are flexible loop. Residues 165-167 (DAK), Asp240, 246-247 (RK), Ala263, and Lys267 each bind ATP. Asp240 lines the L-methionine pocket. Residue Lys271 participates in L-methionine binding.

The protein belongs to the AdoMet synthase family. In terms of assembly, homotetramer; dimer of dimers. Mg(2+) serves as cofactor. It depends on K(+) as a cofactor.

It localises to the cytoplasm. It catalyses the reaction L-methionine + ATP + H2O = S-adenosyl-L-methionine + phosphate + diphosphate. Its pathway is amino-acid biosynthesis; S-adenosyl-L-methionine biosynthesis; S-adenosyl-L-methionine from L-methionine: step 1/1. Catalyzes the formation of S-adenosylmethionine (AdoMet) from methionine and ATP. The overall synthetic reaction is composed of two sequential steps, AdoMet formation and the subsequent tripolyphosphate hydrolysis which occurs prior to release of AdoMet from the enzyme. The polypeptide is S-adenosylmethionine synthase (Cellvibrio japonicus (strain Ueda107) (Pseudomonas fluorescens subsp. cellulosa)).